A 421-amino-acid polypeptide reads, in one-letter code: Ethanolamine-phosphate cytidylyltransferase (421 aa).

A helical membrane pass occupies residues 8-28 (IVGSCIVGGAAFAVGASFLHL). Positions 203-227 (SRSSLQRQFSHGHSSPKFEDGASSA) are disordered. The span at 204–215 (RSSLQRQFSHGH) shows a compositional bias: polar residues. Residues 262–263 (AF), 270–273 (HVEI), Arg298, 346–349 (HGTV), and 377–381 (SPLDI) contribute to the CTP site. The segment at 402–421 (AKKEASEKKYYEQKSFVSGD) is disordered. A compositionally biased stretch (basic and acidic residues) spans 403-413 (KKEASEKKYYE). At Ser416 the chain carries Phosphoserine.

This sequence belongs to the cytidylyltransferase family. In terms of tissue distribution, expressed in root tip, lateral root primordia, leaves, shoot apex, stem vascular bundles, pollen and embryos.

It is found in the mitochondrion outer membrane. It catalyses the reaction phosphoethanolamine + CTP + H(+) = CDP-ethanolamine + diphosphate. Its pathway is phospholipid metabolism; phosphatidylethanolamine biosynthesis; phosphatidylethanolamine from ethanolamine: step 2/3. Its function is as follows. Plays an important role in the biosynthesis of the phospholipid phosphatidylethanolamine. Catalyzes the formation of CDP-ethanolamine. Essential for early embryonic development. The protein is Ethanolamine-phosphate cytidylyltransferase of Arabidopsis thaliana (Mouse-ear cress).